Reading from the N-terminus, the 630-residue chain is DNA topoisomerase 4 subunit B (630 aa).

ATP-binding positions include Tyr5, Asn42, Asp69, 110–116 (GLHGVGI), and Lys334. The Toprim domain occupies 412–525 (TELFLVEGDS…HGHVYVALPP (114 aa)). The Mg(2+) site is built by Glu418, Asp490, and Asp492.

It belongs to the type II topoisomerase family. ParE type 1 subfamily. Heterotetramer composed of ParC and ParE. It depends on Mg(2+) as a cofactor. Mn(2+) is required as a cofactor. The cofactor is Ca(2+).

It carries out the reaction ATP-dependent breakage, passage and rejoining of double-stranded DNA.. Pyrrolopyrimidines inhibit both GyrB and its paralog in topoisomerase IV (parE). Its function is as follows. Topoisomerase IV is essential for chromosome segregation; it is the principal protein responsible for decatenating newly replicated chromosomes. It relaxes supercoiled DNA. MukB stimulates the relaxation activity of topoisomerase IV and also has a modest effect on decatenation. The sequence is that of DNA topoisomerase 4 subunit B from Escherichia coli (strain K12).